The primary structure comprises 1738 residues: Sodium leak channel NALCN (1738 aa).

The Cytoplasmic portion of the chain corresponds to 1–36 (MLKRKQSSRVEAQPVTDFGPDESLSDNADILWINKP). Residues 37-57 (WVHSLLRICAIISVISVCMNT) form a helical membrane-spanning segment. Residues 58 to 65 (PMTFEHYP) lie on the Extracellular side of the membrane. The chain crosses the membrane as a helical span at residues 66-90 (PLQYVTFTLDTLLMFLYTAEMIAKM). Topologically, residues 91 to 106 (HIRGIVKGDSSYVKDR) are cytoplasmic. A helical transmembrane segment spans residues 107 to 129 (WCVFDGFMVFCLWVSLVLQVFEI). Residues 130-137 (ADIVDQMS) lie on the Extracellular side of the membrane. The chain crosses the membrane as a helical; Voltage-sensor span at residues 138–158 (PWGMLRIPRPLIMIRAFRIYF). Topologically, residues 159–173 (RFELPRTRITNILKR) are cytoplasmic. Residues 174–199 (SGEQIWSVSIFLLFFLLLYGILGVQM) form a helical membrane-spanning segment. Residues 200–269 (FGTFTYHCVV…YSGFNEIGTS (70 aa)) are Extracellular-facing. 2 disulfides stabilise this stretch: Cys-207–Cys-239 and Cys-229–Cys-245. 2 N-linked (GlcNAc...) asparagine glycosylation sites follow: Asn-210 and Asn-216. The pore-forming intramembrane region spans 270-289 (IFTVYEAASQEGWVFLMYRA). Over 290–294 (IDSFP) the chain is Extracellular. A helical membrane pass occupies residues 295–322 (RWRSYFYFITLIFFLAWLVKNVFIAVII). The Cytoplasmic segment spans residues 323–382 (ETFAEIRVQFQQMWGSRSSTTSTATTQMFHEDAAGGWQLVAVDVNKPQGRAPACLQKMMR). A helical transmembrane segment spans residues 383–403 (SSVFHMFILSMVTVDVIVAAS). Topologically, residues 404–416 (NYYKGENFRRQYD) are extracellular. The helical transmembrane segment at 417–439 (EFYLAEVAFTVLFDLEALLKIWC) threads the bilayer. The Cytoplasmic segment spans residues 440-447 (LGFTGYIS). The chain crosses the membrane as a helical span at residues 448 to 468 (SSLHKFELLLVIGTTLHVYPD). At 469 to 472 (LYHS) the chain is on the extracellular side. Residues 473–492 (QFTYFQVLRVVRLIKISPAL) form a helical; Voltage-sensor membrane-spanning segment. Residues 493 to 502 (EDFVYKIFGP) lie on the Cytoplasmic side of the membrane. Residues 503-530 (GKKLGSLVVFTASLLIVMSAISLQMFCF) traverse the membrane as a helical segment. The Extracellular portion of the chain corresponds to 531–543 (VEELDRFTTFPRA). Residues 544 to 563 (FMSMFQILTQEGWVDVMDQT) constitute an intramembrane region (pore-forming). The Extracellular portion of the chain corresponds to 564–569 (LNAVGH). Residues 570-599 (MWAPVVAIYFILYHLFATLILLSLFVAVIL) traverse the membrane as a helical segment. The Cytoplasmic segment spans residues 600–886 (DNLELDEDLK…QLYDLLGLVT (287 aa)). The interval 762–785 (QERRSLRHGSNSQRISRGKSLETL) is disordered. Positions 795–830 (YRNAQREDSEIKMIQEKKEQAEMKRKVQEEELRENH) form a coiled coil. A helical membrane pass occupies residues 887-906 (YLDWVMIIVTICSCISMMFE). Residues 907 to 915 (SPFRRVMHA) are Extracellular-facing. A helical membrane pass occupies residues 916 to 939 (PTLQIAEYVFVIFMSIELNLKIMA). Residues 940-947 (DGLFFTPT) are Cytoplasmic-facing. A helical membrane pass occupies residues 948 to 972 (AVIRDFGGVMDIFIYLVSLIFLCWM). The Extracellular portion of the chain corresponds to 973–980 (PQNVPAES). A helical; Voltage-sensor membrane pass occupies residues 981 to 1003 (GAQLLMVLRCLRPLRIFKLVPQM). Residues 1004 to 1015 (RKVVRELFSGFK) are Cytoplasmic-facing. A helical transmembrane segment spans residues 1016–1039 (EIFLVSILLLTLMLVFASFGVQLF). Over 1040 to 1104 (AGKLAKCNDP…NFNFDNVGNA (65 aa)) the chain is Extracellular. Cys-1046 and Cys-1057 are joined by a disulfide. N-linked (GlcNAc...) asparagine glycosylation is present at Asn-1064. Positions 1105 to 1124 (MLALFEVLSLKGWVEVRDVI) form an intramembrane region, pore-forming. The Extracellular portion of the chain corresponds to 1125–1129 (IHRVG). A helical transmembrane segment spans residues 1130–1159 (PIHGIYIHVFVFLGCMIGLTLFVGVVIANF). The Cytoplasmic segment spans residues 1160–1210 (NENKGTALLTVDQRRWEDLKSRLKIAQPLHLPPRPDNDGFRAKMYDITQHP). Residues 1211-1227 (FFKRTIALLVLAQSVLL) traverse the membrane as a helical segment. At 1228-1236 (SVKWDVEDP) the chain is on the extracellular side. Residues 1237–1260 (VTVPLATMSVVFTFIFVLEVTMKI) traverse the membrane as a helical segment. The Cytoplasmic segment spans residues 1261-1271 (IAMSPAGFWQS). Residues 1272 to 1293 (RRNRYDLLVTSLGVVWVVLHFA) form a helical membrane-spanning segment. The Extracellular segment spans residues 1294–1296 (LLN). The helical; Voltage-sensor transmembrane segment at 1297-1318 (AYTYMMGACVIVFRFFSICGKH) threads the bilayer. Topologically, residues 1319–1331 (VTLKMLLLTVVVS) are cytoplasmic. The helical transmembrane segment at 1332 to 1357 (MYKSFFIIVGMFLLLLCYAFAGVVLF) threads the bilayer. The Extracellular portion of the chain corresponds to 1358 to 1378 (GTVKYGENINRHANFSSAGKA). An intramembrane region (pore-forming) is located at residues 1379–1398 (ITVLFRIVTGEDWNKIMHDC). Residues 1399-1420 (MVQPPFCTPDEFTYWATDCGNY) are Extracellular-facing. A disulfide bridge connects residues Cys-1405 and Cys-1417. A helical membrane pass occupies residues 1421 to 1447 (AGALMYFCSFYVIIAYIMLNLLVAIIV). The Cytoplasmic portion of the chain corresponds to 1448 to 1738 (ENFSLFYSTE…DESGDDLLDI (291 aa)). The segment at 1611-1678 (PPSIETTQPS…QWRLPSAPKP (68 aa)) is disordered. Polar residues predominate over residues 1613–1632 (SIETTQPSEDTNANSQDNSM). Over residues 1633–1648 (QPETSSQQQLLSPTLS) the composition is skewed to low complexity.

The protein belongs to the NALCN family. Found in a complex with NALCN, UNC79, UNC80 and NACL1; these auxiliary subunits are indispensable for the function of NALCN channel. Interacts with UNC80; required for the NALCN activation/inhibition by GPCRs in neurons. Found in a complex with NALCN, UNC79 and UNC80; UNC80 bridges NALCN to UNC79. Interacts with CHRM3. In terms of processing, phosphorylated on tyrosine residues.

It is found in the cell membrane. The enzyme catalyses Na(+)(in) = Na(+)(out). With respect to regulation, inhibited by low micromolar concentrations of Gd(3+) and high micromolar concentrations of verapamil. Insensitive to tetrodotoxin (TTX) and potentiated by low external Ca(2+) concentration. Functionally, voltage-gated ion channel responsible for the resting Na(+) permeability that controls neuronal excitability. NALCN channel functions as a multi-protein complex, which consists at least of NALCN, NALF1, UNC79 and UNC80. NALCN is the voltage-sensing, pore-forming subunit of the NALCN channel complex. NALCN channel complex is constitutively active and conducts monovalent cations but is blocked by physiological concentrations of extracellular divalent cations. In addition to its role in regulating neuronal excitability, is required for normal respiratory rhythm, systemic osmoregulation by controlling the serum sodium concentration and in the regulation of the intestinal pace-making activity in the interstitial cells of Cajal. NALCN channel is also activated by neuropeptides such as neurotensin and substance P (SP) through a SRC family kinases-dependent pathway. In addition, NALCN activity is enhanced/modulated by several GPCRs, such as CHRM3. In Homo sapiens (Human), this protein is Sodium leak channel NALCN.